Reading from the N-terminus, the 162-residue chain is uncharacterized protein (162 aa).

The chain crosses the membrane as a helical span at residues 6–24; that stretch reads SYLISIFYIILITSETTAF.

The protein localises to the membrane. This is an uncharacterized protein from Caenorhabditis elegans.